A 164-amino-acid polypeptide reads, in one-letter code: uncharacterized protein (164 aa).

Residues 46-142 (GRSPEQKEHV…APDNSIYDTL (97 aa)) form a disordered region.

This is an uncharacterized protein from Caenorhabditis elegans.